A 379-amino-acid polypeptide reads, in one-letter code: Cobalt-precorrin-5B C(1)-methyltransferase (379 aa).

This sequence belongs to the CbiD family.

It catalyses the reaction Co-precorrin-5B + S-adenosyl-L-methionine = Co-precorrin-6A + S-adenosyl-L-homocysteine. It functions in the pathway cofactor biosynthesis; adenosylcobalamin biosynthesis; cob(II)yrinate a,c-diamide from sirohydrochlorin (anaerobic route): step 6/10. In terms of biological role, catalyzes the methylation of C-1 in cobalt-precorrin-5B to form cobalt-precorrin-6A. The protein is Cobalt-precorrin-5B C(1)-methyltransferase of Salmonella paratyphi A (strain ATCC 9150 / SARB42).